The sequence spans 417 residues: Type II methyltransferase M.Eco47II (417 aa).

An SAM-dependent MTase C5-type domain is found at 81–414; that stretch reads YTVLELFAGA…KSVVHLLDKI (334 aa). C153 is an active-site residue.

Belongs to the class I-like SAM-binding methyltransferase superfamily. C5-methyltransferase family.

The catalysed reaction is a 2'-deoxycytidine in DNA + S-adenosyl-L-methionine = a 5-methyl-2'-deoxycytidine in DNA + S-adenosyl-L-homocysteine + H(+). A methylase that recognizes the double-stranded sequence 5'-GGNCC-3', methylates C-? on both strands, and protects the DNA from cleavage by both the Eco47I and Eco47II endonucleases. The polypeptide is Type II methyltransferase M.Eco47II (Escherichia coli).